The chain runs to 298 residues: Syntaxin-4 (298 aa).

The Cytoplasmic portion of the chain corresponds to 1 to 274 (MRDRTHELRQ…NQKKARKKKV (274 aa)). Phosphoserine occurs at positions 15, 29, 35, 36, 117, 208, and 248. The stretch at 38-163 (DDEFFQKVQT…ERIRRQLKIT (126 aa)) forms a coiled coil. The tract at residues 154–298 (ERIRRQLKIT…VIIGITITVG (145 aa)) is interaction with CENPF. Residues 200 to 262 (LNEISARHSE…ERGQEHVKIA (63 aa)) enclose the t-SNARE coiled-coil homology domain. Residues 275-295 (MIAICVSVTVLILAVIIGITI) form a helical; Anchor for type IV membrane protein membrane-spanning segment. Topologically, residues 296–298 (TVG) are extracellular.

This sequence belongs to the syntaxin family. In terms of assembly, found in a complex with VAMP8 and SNAP23. Detected in a complex with SNAP23 and STXBP4. Interacts with SNAP23 and SNAPIN. Interacts with VAMP2. Interacts with LLGL1. Interacts (via C-terminus) with CENPF. Interacts with DOC2B. Interacts with STXBP3; excludes interaction with DOC2B and SNAP25. Interacts with STXBP4; excludes interaction with VAMP2. Component of the SNARE complex composed of STX4, SNAP23 and VAMP7 that interacts with SYT7 during lysosomal exocytosis. Interacts with STXBP6. Interacts with STXBP5L. In terms of tissue distribution, expressed in all tissues tested including adipose, brain, testis, intestine, liver, heart, spleen, skeletal muscle and kidney.

It localises to the cell membrane. Its subcellular location is the cell projection. The protein resides in the neuron projection. It is found in the stereocilium. Functionally, plasma membrane t-SNARE that mediates docking of transport vesicles. Necessary for the translocation of SLC2A4 from intracellular vesicles to the plasma membrane. In neurons, recruited at neurite tips to membrane domains rich in the phospholipid 1-oleoyl-2-palmitoyl-PC (OPPC) which promotes neurite tip surface expression of the dopamine transporter SLC6A3/DAT by facilitating fusion of SLC6A3-containing transport vesicles with the plasma membrane. Together with STXB3 and VAMP2, may also play a role in docking/fusion of intracellular GLUT4-containing vesicles with the cell surface in adipocytes and in docking of synaptic vesicles at presynaptic active zones. Required for normal hearing. In Rattus norvegicus (Rat), this protein is Syntaxin-4 (Stx4).